Reading from the N-terminus, the 417-residue chain is Serine--tRNA ligase (417 aa).

226-228 lines the L-serine pocket; it reads TSE. ATP-binding positions include 257–259 and V273; that span reads RRE. Residue E280 coordinates L-serine. An ATP-binding site is contributed by 344-347; it reads EVTS. L-serine is bound at residue T379.

This sequence belongs to the class-II aminoacyl-tRNA synthetase family. Type-1 seryl-tRNA synthetase subfamily. As to quaternary structure, homodimer. The tRNA molecule binds across the dimer.

It is found in the cytoplasm. The catalysed reaction is tRNA(Ser) + L-serine + ATP = L-seryl-tRNA(Ser) + AMP + diphosphate + H(+). It catalyses the reaction tRNA(Sec) + L-serine + ATP = L-seryl-tRNA(Sec) + AMP + diphosphate + H(+). It participates in aminoacyl-tRNA biosynthesis; selenocysteinyl-tRNA(Sec) biosynthesis; L-seryl-tRNA(Sec) from L-serine and tRNA(Sec): step 1/1. Its function is as follows. Catalyzes the attachment of serine to tRNA(Ser). Is also able to aminoacylate tRNA(Sec) with serine, to form the misacylated tRNA L-seryl-tRNA(Sec), which will be further converted into selenocysteinyl-tRNA(Sec). This Tropheryma whipplei (strain TW08/27) (Whipple's bacillus) protein is Serine--tRNA ligase.